The following is a 262-amino-acid chain: Phosphatidylserine decarboxylase proenzyme (262 aa).

Active-site charge relay system; for autoendoproteolytic cleavage activity residues include aspartate 86, histidine 142, and serine 226. Residue serine 226 is the Schiff-base intermediate with substrate; via pyruvic acid; for decarboxylase activity of the active site. At serine 226 the chain carries Pyruvic acid (Ser); by autocatalysis.

It belongs to the phosphatidylserine decarboxylase family. PSD-B subfamily. Prokaryotic type I sub-subfamily. In terms of assembly, heterodimer of a large membrane-associated beta subunit and a small pyruvoyl-containing alpha subunit. The cofactor is pyruvate. In terms of processing, is synthesized initially as an inactive proenzyme. Formation of the active enzyme involves a self-maturation process in which the active site pyruvoyl group is generated from an internal serine residue via an autocatalytic post-translational modification. Two non-identical subunits are generated from the proenzyme in this reaction, and the pyruvate is formed at the N-terminus of the alpha chain, which is derived from the carboxyl end of the proenzyme. The autoendoproteolytic cleavage occurs by a canonical serine protease mechanism, in which the side chain hydroxyl group of the serine supplies its oxygen atom to form the C-terminus of the beta chain, while the remainder of the serine residue undergoes an oxidative deamination to produce ammonia and the pyruvoyl prosthetic group on the alpha chain. During this reaction, the Ser that is part of the protease active site of the proenzyme becomes the pyruvoyl prosthetic group, which constitutes an essential element of the active site of the mature decarboxylase.

It localises to the cell membrane. It carries out the reaction a 1,2-diacyl-sn-glycero-3-phospho-L-serine + H(+) = a 1,2-diacyl-sn-glycero-3-phosphoethanolamine + CO2. Its pathway is phospholipid metabolism; phosphatidylethanolamine biosynthesis; phosphatidylethanolamine from CDP-diacylglycerol: step 2/2. In terms of biological role, catalyzes the formation of phosphatidylethanolamine (PtdEtn) from phosphatidylserine (PtdSer). The chain is Phosphatidylserine decarboxylase proenzyme from Bacillus thuringiensis subsp. konkukian (strain 97-27).